The following is a 217-amino-acid chain: 3,4-dihydroxy-2-butanone 4-phosphate synthase (217 aa).

Residues 37 to 38, Asp-42, 150 to 154, and Glu-174 contribute to the D-ribulose 5-phosphate site; these read RE and RRGHT. Residue Glu-38 participates in Mg(2+) binding. His-153 lines the Mg(2+) pocket.

The protein belongs to the DHBP synthase family. In terms of assembly, homodimer. The cofactor is Mg(2+). Requires Mn(2+) as cofactor.

It catalyses the reaction D-ribulose 5-phosphate = (2S)-2-hydroxy-3-oxobutyl phosphate + formate + H(+). It functions in the pathway cofactor biosynthesis; riboflavin biosynthesis; 2-hydroxy-3-oxobutyl phosphate from D-ribulose 5-phosphate: step 1/1. Functionally, catalyzes the conversion of D-ribulose 5-phosphate to formate and 3,4-dihydroxy-2-butanone 4-phosphate. The chain is 3,4-dihydroxy-2-butanone 4-phosphate synthase from Serratia proteamaculans (strain 568).